A 1110-amino-acid chain; its full sequence is Serine/threonine-protein kinase PknK (1110 aa).

One can recognise a Protein kinase domain in the interval 26–283 (FDNVEEIGRG…TAADVGEELR (258 aa)). ATP contacts are provided by residues 32-40 (IGRGGFGVV) and K55. The Proton acceptor role is filled by D149. The Mg(2+) site is built by N154 and D167. Phosphothreonine; by autocatalysis occurs at positions 179 and 181. Residues 308–343 (RSPEAHAAHRHTGGGTPTVPTPPTPATKYRPSVPTG) are disordered.

This sequence belongs to the protein kinase superfamily. Ser/Thr protein kinase family. Forms oligomeric complexes in solution. In terms of processing, can autophosphorylate the carboxyl terminal region in addition to Thr-179 and Thr-181.

The protein resides in the cytoplasm. Its subcellular location is the cell membrane. The protein localises to the secreted. It is found in the cell wall. It catalyses the reaction L-seryl-[protein] + ATP = O-phospho-L-seryl-[protein] + ADP + H(+). It carries out the reaction L-threonyl-[protein] + ATP = O-phospho-L-threonyl-[protein] + ADP + H(+). Its function is as follows. Key microbial factor involved in regulation of early and late events in tuberculosis infection, and in host-pathogen interactions. This Mycobacterium tuberculosis (strain CDC 1551 / Oshkosh) protein is Serine/threonine-protein kinase PknK (pknK).